We begin with the raw amino-acid sequence, 434 residues long: Putative polysaccharide biosynthesis protein with aminopeptidase-like domain (434 aa).

Aminopeptidase-like stretches follow at residues 1–55 and 57–355; these read MEEI…IHEV and SGTK…IENN. Positions 56–164 are insert; the sequence is KSGTKVFDWT…VVIDSSLEDG (109 aa). Zn(2+) is bound by residues H189, D195, and H324. The interval 356–434 is permutated winged helix-turn-helix; it reads RTYLNLNPKC…LYRVELLKLV (79 aa).

It belongs to the UPF0770 family. In terms of assembly, homotrimer. The cofactor is Zn(2+).

Its function is as follows. The genomic context suggests a role in the biosynthesis of modified polysaccharides; this association with genes involved in carbohydrate metabolism is observed in several phylogenetically distinct taxa. Is not expected to have peptidase activity despite low similarity to aminopeptidases. In Clostridium acetobutylicum (strain ATCC 824 / DSM 792 / JCM 1419 / IAM 19013 / LMG 5710 / NBRC 13948 / NRRL B-527 / VKM B-1787 / 2291 / W), this protein is Putative polysaccharide biosynthesis protein with aminopeptidase-like domain.